Consider the following 306-residue polypeptide: Homoserine kinase (306 aa).

88-98 (PLARGLGSSAT) is a binding site for ATP.

This sequence belongs to the GHMP kinase family. Homoserine kinase subfamily.

It localises to the cytoplasm. The catalysed reaction is L-homoserine + ATP = O-phospho-L-homoserine + ADP + H(+). It participates in amino-acid biosynthesis; L-threonine biosynthesis; L-threonine from L-aspartate: step 4/5. Catalyzes the ATP-dependent phosphorylation of L-homoserine to L-homoserine phosphate. This Synechococcus sp. (strain ATCC 27144 / PCC 6301 / SAUG 1402/1) (Anacystis nidulans) protein is Homoserine kinase.